The sequence spans 201 residues: MQYPEAIAKLIESYSKLPGIGRKSATRLAFYTLGMSDDDVKNFARSLSASKSDLTFCRICGFITSKDDDPCVICSDESRDQSKIFVVENSQDEMAIENTHDYHGLYHVLNGVLSPMEGRGPEDINITSLITRLSDHSEVKEVIIGLDASTEGEATTLYLARLIRPSGIKVTRLARGLSVGTNVDYADQLTLTQAVNGRTEI.

Residues 57 to 74 form a C4-type zinc finger; it reads CRICGFITSKDDDPCVIC. The region spanning 82–178 is the Toprim domain; sequence SKIFVVENSQ…KVTRLARGLS (97 aa).

It belongs to the RecR family.

May play a role in DNA repair. It seems to be involved in an RecBC-independent recombinational process of DNA repair. It may act with RecF and RecO. This chain is Recombination protein RecR, found in Oenococcus oeni (strain ATCC BAA-331 / PSU-1).